A 372-amino-acid chain; its full sequence is Chorismate synthase (372 aa).

R48 provides a ligand contact to NADP(+). FMN-binding positions include 131 to 133 (RSS), 243 to 244 (NA), G288, 303 to 307 (KPTSS), and R329.

This sequence belongs to the chorismate synthase family. As to quaternary structure, homotetramer. It depends on FMNH2 as a cofactor.

The enzyme catalyses 5-O-(1-carboxyvinyl)-3-phosphoshikimate = chorismate + phosphate. It functions in the pathway metabolic intermediate biosynthesis; chorismate biosynthesis; chorismate from D-erythrose 4-phosphate and phosphoenolpyruvate: step 7/7. Catalyzes the anti-1,4-elimination of the C-3 phosphate and the C-6 proR hydrogen from 5-enolpyruvylshikimate-3-phosphate (EPSP) to yield chorismate, which is the branch point compound that serves as the starting substrate for the three terminal pathways of aromatic amino acid biosynthesis. This reaction introduces a second double bond into the aromatic ring system. The chain is Chorismate synthase from Caulobacter vibrioides (strain ATCC 19089 / CIP 103742 / CB 15) (Caulobacter crescentus).